Reading from the N-terminus, the 227-residue chain is Glutathione S-transferase U18 (227 aa).

Residues 4–83 (EDVKLIGSWA…YIDEAWNSSG (80 aa)) enclose the GST N-terminal domain. Glutathione-binding positions include 14–15 (SV), 40–41 (SK), 54–55 (KM), and 67–68 (ES). In terms of domain architecture, GST C-terminal spans 90 to 221 (HPYDRAIARF…TKLAEFARKL (132 aa)).

This sequence belongs to the GST superfamily. Tau family.

It is found in the cytoplasm. It localises to the cytosol. It catalyses the reaction RX + glutathione = an S-substituted glutathione + a halide anion + H(+). Functionally, may be involved in the conjugation of reduced glutathione to a wide number of exogenous and endogenous hydrophobic electrophiles and have a detoxification role against certain herbicides. This chain is Glutathione S-transferase U18 (GSTU18), found in Arabidopsis thaliana (Mouse-ear cress).